Here is a 141-residue protein sequence, read N- to C-terminus: Large ribosomal subunit protein uL11 (141 aa).

It belongs to the universal ribosomal protein uL11 family. As to quaternary structure, part of the ribosomal stalk of the 50S ribosomal subunit. Interacts with L10 and the large rRNA to form the base of the stalk. L10 forms an elongated spine to which L12 dimers bind in a sequential fashion forming a multimeric L10(L12)X complex. In terms of processing, one or more lysine residues are methylated.

In terms of biological role, forms part of the ribosomal stalk which helps the ribosome interact with GTP-bound translation factors. This is Large ribosomal subunit protein uL11 from Lacticaseibacillus casei (strain BL23) (Lactobacillus casei).